A 320-amino-acid polypeptide reads, in one-letter code: Epoxidase atD (320 aa).

Residues Asn245 and Asn299 are each glycosylated (N-linked (GlcNAc...) asparagine).

It functions in the pathway secondary metabolite biosynthesis. Epoxidase; part of the gene cluster that mediates the biosynthesis of terreic acid, a quinone epoxide inhibitor of Bruton's tyrosine kinase. The first step of the pathway is the synthesis of 6-methylsalicylic acid (6-MSA) by the 6-methylsalicylic acid synthase atX. In the biosynthesis of 6-MSA, atX utilizes one acetyl-CoA and three malonyl-CoAs as its substrates and catalyzes a series of programmed reactions including Claisen condensation, reduction, aldol cyclization, and the hydrolytic cleavage that yields 6-MSA. The 6-methylsalicylate 1-monooxygenase atA then catalyzes the decarboxylative hydroxylation of 6-MSA to 3-methylcatechol. The next step is the conversion of 3-methylcatechol to 3-methyl-1,2,4-benzenetriol by cytochrome P450 monooxygenase atE, which is enhanced by cytochrome P450 monooxygenase atG. Then, the epoxidase atD catalyzes the epoxidation and hydroxyl oxidation of 3-methyl-1,2,4-benzenetriol to terremutin. Lastly, GMC oxidoreductase atC oxidizes terremutin to terreic acid. The protein is Epoxidase atD of Aspergillus terreus (strain NIH 2624 / FGSC A1156).